Here is a 1225-residue protein sequence, read N- to C-terminus: RNA-directed RNA polymerase VP2 (1225 aa).

A RdRp catalytic domain is found at 497–727 (LFLSFMPYTI…NSIVLLQQLV (231 aa)).

This sequence belongs to the reoviridae RNA-directed RNA polymerase family. Interacts with VP6.

The catalysed reaction is RNA(n) + a ribonucleoside 5'-triphosphate = RNA(n+1) + diphosphate. In terms of biological role, RNA-directed RNA polymerase that is involved in transcription and genome replication. Following infection, it catalyzes the synthesis of fully conservative plus strands. After core assembly, which consists in recruitment of one capped plus-strand for each genomic segments and polymerase complexes, the polymerase switches mode and catalyzes the synthesis of complementary minus-strands. This Lymantria dispar (Gypsy moth) protein is RNA-directed RNA polymerase VP2 (S2).